We begin with the raw amino-acid sequence, 149 residues long: Gamma-glutamylaminecyclotransferase (149 aa).

7–10 (YGTL) is a substrate binding site. Residue Glu82 is the Proton acceptor of the active site.

It belongs to the gamma-glutamylcyclotransferase family. Monomer.

It carries out the reaction epsilon-(gamma-L-glutamyl)-L-lysine = 5-oxo-L-proline + L-lysine. Its function is as follows. Contributes to degradation of proteins cross-linked by transglutaminases by degrading the cross-link between a lysine and a glutamic acid residue. Catalyzes the formation of 5-oxo-L-proline from L-gamma-glutamyl-L-epsilon-lysine. Inactive with L-gamma-glutamyl-alpha-amino acid substrates such as L-gamma-glutamyl-L-alpha-cysteine and L-gamma-glutamyl-L-alpha-alanine. The sequence is that of Gamma-glutamylaminecyclotransferase (Ggact) from Mus musculus (Mouse).